A 382-amino-acid polypeptide reads, in one-letter code: MVDNRPLTIALVAGETSGDILGAGLIRALKAREPNARFVGVAGPLMQAEGCEAWYEMEELAVMGIVEVLGRLRRLLHIRADLTGRFTDLKPDVFVGIDAPDFNITLEGNLKKQGIKTIHYVSPSVWAWRQKRVFKIGRSTDMVLAFLPFEKAFYDRFNVPCRFIGHTMADAMPLDPDKNAARDSLGIPHDAHCLALLPGSRGAEVEMLSADFLRTAQILRQTYPDLEVVVPLVNAKRREQFERIKAAVAPDLHIHLLDGKGREAMVASDAALLASGTAALECMLAKCPMVVGYRMKPFTFWLAKRLVKTDYVSLPNLLAGRELVKELLQDECQPQALADALLPLLADGKTRHQMHDTFRELHQQIRCNADEQAADAVMELAQ.

The protein belongs to the LpxB family.

The enzyme catalyses 2-N,3-O-bis[(3R)-3-hydroxytetradecanoyl]-alpha-D-glucosaminyl 1-phosphate + UDP-2-N,3-O-bis[(3R)-3-hydroxytetradecanoyl]-alpha-D-glucosamine = lipid A disaccharide (E. coli) + UDP + H(+). It carries out the reaction a lipid X + a UDP-2-N,3-O-bis[(3R)-3-hydroxyacyl]-alpha-D-glucosamine = a lipid A disaccharide + UDP + H(+). It functions in the pathway glycolipid biosynthesis; lipid IV(A) biosynthesis; lipid IV(A) from (3R)-3-hydroxytetradecanoyl-[acyl-carrier-protein] and UDP-N-acetyl-alpha-D-glucosamine: step 5/6. Its function is as follows. Condensation of UDP-2,3-diacylglucosamine and 2,3-diacylglucosamine-1-phosphate to form lipid A disaccharide, a precursor of lipid A, a phosphorylated glycolipid that anchors the lipopolysaccharide to the outer membrane of the cell. This is Lipid-A-disaccharide synthase from Enterobacter sp. (strain 638).